The primary structure comprises 685 residues: Pentatricopeptide repeat-containing protein At5g19020, mitochondrial (685 aa).

Residues 1-23 constitute a mitochondrion transit peptide; it reads MIKLIRFFRSRRCWVISLQARCF. PPR repeat units follow at residues 40–74, 75–105, 106–136, 137–171, 172–206, 207–237, 238–268, 269–303, 304–338, 339–369, 370–400, 401–435, 437–471, 472–502, 506–540, 541–576, and 577–607; these read TERA…GLDS, NGYI…HAKL, DSAS…MPER, SCVS…GIML, NEVT…KLEG, RVFV…MPER, NLVT…ITEK, DIVS…GMKP, SEVM…GFDC, YDFL…SVKD, HIAS…THDK, DIFS…SQVK, DAIT…TIPP, NDNL…TKNI, TISP…PIKP, NSIT…GIEP, and DIKH…MPVK. The interval 612 to 685 is type E motif; degenerate; that stretch reads IWGMLLSASR…EWSRAFSGVV (74 aa).

The protein belongs to the PPR family. PCMP-E subfamily.

It is found in the mitochondrion. In Arabidopsis thaliana (Mouse-ear cress), this protein is Pentatricopeptide repeat-containing protein At5g19020, mitochondrial (PCMP-E42).